Reading from the N-terminus, the 431-residue chain is Adenylosuccinate synthetase (431 aa).

Residues 13 to 19 and 41 to 43 contribute to the GTP site; these read GDEGKGK and GHT. Asp-14 functions as the Proton acceptor in the catalytic mechanism. Positions 14 and 41 each coordinate Mg(2+). IMP-binding positions include 14–17, 39–42, Thr-130, Arg-144, Gln-225, Thr-240, and Arg-304; these read DEGK and NAGH. Residue His-42 is the Proton donor of the active site. A substrate-binding site is contributed by 300–306; sequence ATTGRKR. GTP is bound by residues Arg-306, 332-334, and 415-417; these read KLD and STG.

Belongs to the adenylosuccinate synthetase family. Homodimer. The cofactor is Mg(2+).

The protein resides in the cytoplasm. It carries out the reaction IMP + L-aspartate + GTP = N(6)-(1,2-dicarboxyethyl)-AMP + GDP + phosphate + 2 H(+). Its pathway is purine metabolism; AMP biosynthesis via de novo pathway; AMP from IMP: step 1/2. Plays an important role in the de novo pathway of purine nucleotide biosynthesis. Catalyzes the first committed step in the biosynthesis of AMP from IMP. This chain is Adenylosuccinate synthetase, found in Shewanella oneidensis (strain ATCC 700550 / JCM 31522 / CIP 106686 / LMG 19005 / NCIMB 14063 / MR-1).